The primary structure comprises 113 residues: Protein FPV195 (113 aa).

This sequence belongs to the poxviruses A31 family.

The chain is Protein FPV195 from Vertebrata (FPV).